We begin with the raw amino-acid sequence, 707 residues long: Bone morphogenetic protein 1 (707 aa).

Residues 57–90 are disordered; it reads SGAATNISRPEKGRRTRKERRRSREKRASTSRPE. N-linked (GlcNAc...) asparagine glycosylation is present at N62. Over residues 68-81 the composition is skewed to basic residues; the sequence is KGRRTRKERRRSRE. In terms of domain architecture, Peptidase M12A spans 84–283; the sequence is ASTSRPERVW…AQARKLYKCP (200 aa). N-linked (GlcNAc...) asparagine glycosylation is present at N105. 4 cysteine pairs are disulfide-bonded: C126–C282, C146–C168, C148–C149, and C285–C311. H176 provides a ligand contact to Zn(2+). Residue E177 is part of the active site. Positions 180 and 186 each coordinate Zn(2+). CUB domains are found at residues 285–397 and 398–509; these read CGET…YEAL and CGGE…NYFK. N-linked (GlcNAc...) asparagine glycosylation is found at N295 and N326. 8 cysteine pairs are disulfide-bonded: C338–C360, C398–C424, C451–C473, C514–C526, C522–C535, C537–C550, C554–C580, and C607–C629. An EGF-like; calcium-binding domain is found at 510-551; it reads EVDECSRPNNGGCEQRCVNTLGSYKCACDPGYELGQDKKSCE. The region spanning 554–666 is the CUB 3 domain; it reads CGGFLTKLNG…KGFQANFFSE (113 aa). An N-linked (GlcNAc...) asparagine glycan is attached at N562. Positions 682-707 are disordered; sequence RGQQNQAPKRVRPRMRLRTVKKTRPP. The span at 690–707 shows a compositional bias: basic residues; it reads KRVRPRMRLRTVKKTRPP.

In terms of assembly, interacts with olfml3/ont1. It depends on Zn(2+) as a cofactor. In terms of processing, proteolytically activated in the trans-Golgi network by furin-like/paired basic proprotein convertases, cleavage is not required for secretion.

It localises to the golgi apparatus. The protein localises to the trans-Golgi network. Its subcellular location is the secreted. The protein resides in the extracellular space. It is found in the extracellular matrix. Metalloprotease involved in pattern formation in gastrula and later differentiation of developing organs. Able to cleave chordin (chrd), suggesting that it may act in dorsoventral patterning during early development by regulating the chordin (chrd) activity. This chain is Bone morphogenetic protein 1 (bmp1), found in Xenopus laevis (African clawed frog).